The following is a 468-amino-acid chain: 6-phospho-beta-galactosidase (468 aa).

The D-galactose 6-phosphate site is built by Q19, H116, N159, E160, and N297. E160 functions as the Proton donor in the catalytic mechanism. E375 functions as the Nucleophile in the catalytic mechanism. S428, W429, K435, and Y437 together coordinate D-galactose 6-phosphate.

This sequence belongs to the glycosyl hydrolase 1 family.

The enzyme catalyses a 6-phospho-beta-D-galactoside + H2O = D-galactose 6-phosphate + an alcohol. The protein operates within carbohydrate metabolism; lactose degradation; D-galactose 6-phosphate and beta-D-glucose from lactose 6-phosphate: step 1/1. This Streptococcus pyogenes serotype M1 protein is 6-phospho-beta-galactosidase.